A 305-amino-acid chain; its full sequence is Glutaminase (305 aa).

Substrate-binding residues include serine 61, asparagine 113, glutamate 158, asparagine 165, tyrosine 189, tyrosine 241, and valine 259.

This sequence belongs to the glutaminase family. In terms of assembly, homotetramer.

It catalyses the reaction L-glutamine + H2O = L-glutamate + NH4(+). This Clostridium botulinum (strain ATCC 19397 / Type A) protein is Glutaminase.